The sequence spans 481 residues: Bindin (481 aa).

A signal peptide spans 1–20 (MGFHQILVTVVALALASVRA). Residues 21–245 (EFPSRTDSPT…DSKRGARKKR (225 aa)) constitute a propeptide that is removed on maturation. 2 stretches are compositionally biased toward basic and acidic residues: residues 154–163 (DGDLRKRRES) and 178–189 (RKGDEPAGHTLK). 2 disordered regions span residues 154-193 (DGDLRKRRESEDVDDDDVSKRASPRKGDEPAGHTLKDLAP) and 219-243 (GHSPTRRATDNDAAVSDDSKRGARK). Positions 352-360 (LRHLRHHSN) are fucose-binding domain. The disordered stretch occupies residues 376 to 481 (SAMQEEEEEE…QPYGQGYLQG (106 aa)). The span at 379–389 (QEEEEEEEEDA) shows a compositional bias: acidic residues. The segment covering 406-416 (AGFGGGGGGGA) has biased composition (gly residues). 2 stretches are compositionally biased toward low complexity: residues 417–440 (MMSPQQMGGQPQGMIGQPQGMGFP) and 464–481 (GMGMPPQGQPYGQGYLQG).

Belongs to the bindin family.

The protein resides in the cytoplasmic vesicle. It is found in the secretory vesicle. It localises to the acrosome lumen. Its function is as follows. Species-specific sea urchin sperm protein required for adhesion of sperm to the egg surface during fertilization. Bindin coats the acrosomal process after it is externalized by the acrosome reaction. It binds to sulfated, fucose-containing polysaccharides on the vitelline layer receptor proteoglycans which cover the egg plasma membrane. The sequence is that of Bindin from Strongylocentrotus purpuratus (Purple sea urchin).